An 89-amino-acid polypeptide reads, in one-letter code: Otospiralin (89 aa).

The first 21 residues, 1–21 (MQPCVLWWLALGLLLGIPAGA), serve as a signal peptide directing secretion.

The protein belongs to the otospiralin family. Ear specific. Expressed in the cochlea and vestibule, but not in the cochlear nerve, cochlear nucleus, spinal chord, muscle, cerebral cortex, cerebellum, diencephalon and olfactory bulb. In the cochlea, expressed in fibrocytes of the spiral limbus, spiral ligament and suprastrial zone. In the vestibule, expressed in cells located to the stroma below the macular and crista sensory epithelia and in the subepithelial layer of the walls of semicircular canals and maculae.

Its subcellular location is the secreted. Functionally, may be essential for the survival of the neurosensory epithelium of the inner ear. This chain is Otospiralin (Otos), found in Rattus norvegicus (Rat).